A 202-amino-acid chain; its full sequence is uncharacterized protein (202 aa).

This is an uncharacterized protein from Methanocaldococcus jannaschii (strain ATCC 43067 / DSM 2661 / JAL-1 / JCM 10045 / NBRC 100440) (Methanococcus jannaschii).